Here is a 255-residue protein sequence, read N- to C-terminus: MKRLNKLVLYISFLILVISFTAGCGMGKEAEIKKSFEKTLSMYPIKNLEDLYDKEGYRDDQFDKNDKGTWIINSEMVVQPKGERMKSKGMVLYMNRNTKTTTGKYIVSETLHDEDGRPKSKDKEYPVKMVDNKIIPTKGIKDENIKKEIENFKFFAQYGSFKDLSKYKDGDISYNPEVPSYSAKYQLTNDDYNVKQLRKRYKIPTNKAPKLLLKGSGDLKGSSVGYKDIEFTFVEKKGENTFFTDSLHLEPSEDK.

The signal sequence occupies residues 1–23 (MKRLNKLVLYISFLILVISFTAG). A lipid anchor (N-palmitoyl cysteine) is attached at Cys24. The S-diacylglycerol cysteine moiety is linked to residue Cys24.

It belongs to the staphylococcal tandem lipoprotein family.

Its subcellular location is the cell membrane. This is an uncharacterized protein from Staphylococcus aureus (strain N315).